The chain runs to 549 residues: DNA polymerase lambda (549 aa).

The BRCT domain occupies aspartate 17 to isoleucine 116. Residues lysine 126–alanine 197 are disordered. Over residues proline 149–valine 175 the composition is skewed to basic and acidic residues. Positions serine 180–alanine 197 are enriched in polar residues. Residues asparagine 233–tyrosine 247 are DNA-binding. Histidine 280 is a catalytic residue. The interval glycine 315–threonine 318 is DNA-binding. DCTP contacts are provided by residues arginine 356, serine 387 to arginine 390, and glycine 396 to aspartate 399. The interval arginine 390–aspartate 399 is involved in primer binding. Aspartate 397, aspartate 399, and aspartate 464 together coordinate Mn(2+). A DNA-binding region spans residues isoleucine 438–alanine 479. DCTP is bound at residue asparagine 487.

Belongs to the DNA polymerase type-X family. Interacts with PCNA. Mn(2+) serves as cofactor. In terms of tissue distribution, expressed in proliferating tissues. Expressed in roots, root apex, young leaves, shoot apical meristem (SAM), flag leaves and panicles.

The protein localises to the nucleus. The catalysed reaction is DNA(n) + a 2'-deoxyribonucleoside 5'-triphosphate = DNA(n+1) + diphosphate. Its function is as follows. Repair polymerase involved in base excision repair (BER) and responsible for repair of lesions that give rise to abasic (AP) sites in DNA. Has both DNA polymerase and terminal transferase activities. Has a 5'-deoxyribose-5-phosphate lyase (dRP lyase) activity. The polypeptide is DNA polymerase lambda (Oryza sativa subsp. japonica (Rice)).